The primary structure comprises 424 residues: Enolase (424 aa).

Residue Gln-165 participates in (2R)-2-phosphoglycerate binding. The Proton donor role is filled by Glu-207. Residues Asp-244, Glu-283, and Asp-310 each coordinate Mg(2+). The (2R)-2-phosphoglycerate site is built by Lys-335, Arg-364, Ser-365, and Lys-386. The active-site Proton acceptor is the Lys-335.

It belongs to the enolase family. It depends on Mg(2+) as a cofactor.

The protein localises to the cytoplasm. The protein resides in the secreted. It localises to the cell surface. The enzyme catalyses (2R)-2-phosphoglycerate = phosphoenolpyruvate + H2O. It functions in the pathway carbohydrate degradation; glycolysis; pyruvate from D-glyceraldehyde 3-phosphate: step 4/5. Functionally, catalyzes the reversible conversion of 2-phosphoglycerate (2-PG) into phosphoenolpyruvate (PEP). It is essential for the degradation of carbohydrates via glycolysis. The polypeptide is Enolase (Chlamydia felis (strain Fe/C-56) (Chlamydophila felis)).